Here is an 893-residue protein sequence, read N- to C-terminus: Translation initiation factor IF-2 (893 aa).

Disordered regions lie at residues 135 to 169 (KAKAKADAEAKAKAKVLTEKPVQESAEDKAAKAEE) and 201 to 300 (ENEK…ESMD). Positions 201 to 224 (ENEKRWAEEEKARKEAEKTVDHHV) are enriched in basic and acidic residues. Residues 251–265 (PSANAGNNANANAGA) are compositionally biased toward low complexity. The 170-residue stretch at 393–562 (SRAPVVTIMG…LLEAEVLELK (170 aa)) folds into the tr-type G domain. The segment at 402–409 (GHVDHGKT) is G1. 402 to 409 (GHVDHGKT) contacts GTP. The segment at 427 to 431 (GITQH) is G2. A G3 region spans residues 448 to 451 (DTPG). Residues 448 to 452 (DTPGH) and 502 to 505 (NKMD) contribute to the GTP site. A G4 region spans residues 502 to 505 (NKMD). The G5 stretch occupies residues 538 to 540 (SAK).

It belongs to the TRAFAC class translation factor GTPase superfamily. Classic translation factor GTPase family. IF-2 subfamily.

It is found in the cytoplasm. One of the essential components for the initiation of protein synthesis. Protects formylmethionyl-tRNA from spontaneous hydrolysis and promotes its binding to the 30S ribosomal subunits. Also involved in the hydrolysis of GTP during the formation of the 70S ribosomal complex. The protein is Translation initiation factor IF-2 of Shewanella halifaxensis (strain HAW-EB4).